A 155-amino-acid chain; its full sequence is Interleukin-2 (155 aa).

The N-terminal stretch at 1–20 is a signal peptide; the sequence is MYKIQLLSCIALTLALVANG. Thr23 is a glycosylation site (O-linked (GalNAc...) threonine). Cysteines 79 and 127 form a disulfide.

The protein belongs to the IL-2 family.

Its subcellular location is the secreted. Functionally, cytokine produced by activated CD4-positive helper T-cells and to a lesser extend activated CD8-positive T-cells and natural killer (NK) cells that plays pivotal roles in the immune response and tolerance. Binds to a receptor complex composed of either the high-affinity trimeric IL-2R (IL2RA/CD25, IL2RB/CD122 and IL2RG/CD132) or the low-affinity dimeric IL-2R (IL2RB and IL2RG). Interaction with the receptor leads to oligomerization and conformation changes in the IL-2R subunits resulting in downstream signaling starting with phosphorylation of JAK1 and JAK3. In turn, JAK1 and JAK3 phosphorylate the receptor to form a docking site leading to the phosphorylation of several substrates including STAT5. This process leads to activation of several pathways including STAT, phosphoinositide-3-kinase/PI3K and mitogen-activated protein kinase/MAPK pathways. Functions as a T-cell growth factor and can increase NK-cell cytolytic activity as well. Promotes strong proliferation of activated B-cells and subsequently immunoglobulin production. Plays a pivotal role in regulating the adaptive immune system by controlling the survival and proliferation of regulatory T-cells, which are required for the maintenance of immune tolerance. Moreover, participates in the differentiation and homeostasis of effector T-cell subsets, including Th1, Th2, Th17 as well as memory CD8-positive T-cells. The sequence is that of Interleukin-2 (IL2) from Bos taurus (Bovine).